The chain runs to 371 residues: Glutamate 5-kinase (371 aa).

ATP is bound at residue Lys-14. The substrate site is built by Ser-54, Asp-141, and Asn-153. An ATP-binding site is contributed by 173–174 (TD). The PUA domain occupies 280-357 (AGDLILDDGA…TQIEKLLGYI (78 aa)).

Belongs to the glutamate 5-kinase family.

The protein resides in the cytoplasm. It catalyses the reaction L-glutamate + ATP = L-glutamyl 5-phosphate + ADP. The protein operates within amino-acid biosynthesis; L-proline biosynthesis; L-glutamate 5-semialdehyde from L-glutamate: step 1/2. In terms of biological role, catalyzes the transfer of a phosphate group to glutamate to form L-glutamate 5-phosphate. The protein is Glutamate 5-kinase of Aromatoleum aromaticum (strain DSM 19018 / LMG 30748 / EbN1) (Azoarcus sp. (strain EbN1)).